A 702-amino-acid chain; its full sequence is Polyribonucleotide nucleotidyltransferase 3 (702 aa).

Residues aspartate 483 and aspartate 489 each coordinate Mg(2+). The KH domain occupies 550-609 (PKVTQIKVHPDKVREVIGAGGKVINKIIDETGCKITIENDGTIYVAAPDQESSRRAVEMI). The S1 motif domain maps to 619 to 687 (GEVYTGKVIK…PQGKIGLSRK (69 aa)).

This sequence belongs to the polyribonucleotide nucleotidyltransferase family. Mg(2+) serves as cofactor.

Its subcellular location is the cytoplasm. The enzyme catalyses RNA(n+1) + phosphate = RNA(n) + a ribonucleoside 5'-diphosphate. In terms of biological role, involved in mRNA degradation. Catalyzes the phosphorolysis of single-stranded polyribonucleotides processively in the 3'- to 5'-direction. The sequence is that of Polyribonucleotide nucleotidyltransferase 3 from Alkaliphilus metalliredigens (strain QYMF).